The chain runs to 264 residues: Probable glycerophosphodiester phosphodiesterase 2 (264 aa).

The GP-PDE domain occupies 17 to 255 (RIAMAHRGFT…DRADLLRDVL (239 aa)). Catalysis depends on His-22, which acts as the Proton acceptor. Residues Glu-50, Asp-52, and His-65 each coordinate a divalent metal cation. The active-site Proton donor is the His-65.

The protein belongs to the glycerophosphoryl diester phosphodiesterase family. Requires a divalent metal cation as cofactor.

It catalyses the reaction a sn-glycero-3-phosphodiester + H2O = an alcohol + sn-glycerol 3-phosphate + H(+). In terms of biological role, glycerophosphodiester phosphodiesterase hydrolyzes glycerophosphodiesters into glycerol-3-phosphate (G3P) and the corresponding alcohol. The protein is Probable glycerophosphodiester phosphodiesterase 2 of Mycobacterium tuberculosis (strain ATCC 25618 / H37Rv).